The following is a 301-amino-acid chain: UDP-3-O-acyl-N-acetylglucosamine deacetylase (301 aa).

Residues H81, H237, and D241 each coordinate Zn(2+). The Proton donor role is filled by H264.

It belongs to the LpxC family. It depends on Zn(2+) as a cofactor.

It catalyses the reaction a UDP-3-O-[(3R)-3-hydroxyacyl]-N-acetyl-alpha-D-glucosamine + H2O = a UDP-3-O-[(3R)-3-hydroxyacyl]-alpha-D-glucosamine + acetate. Its pathway is glycolipid biosynthesis; lipid IV(A) biosynthesis; lipid IV(A) from (3R)-3-hydroxytetradecanoyl-[acyl-carrier-protein] and UDP-N-acetyl-alpha-D-glucosamine: step 2/6. Functionally, catalyzes the hydrolysis of UDP-3-O-myristoyl-N-acetylglucosamine to form UDP-3-O-myristoylglucosamine and acetate, the committed step in lipid A biosynthesis. In Leptospira interrogans serogroup Icterohaemorrhagiae serovar copenhageni (strain Fiocruz L1-130), this protein is UDP-3-O-acyl-N-acetylglucosamine deacetylase.